Consider the following 261-residue polypeptide: Receptor expression-enhancing protein 4 (261 aa).

Transmembrane regions (helical) follow at residues 1–21 and 35–55; these read MVSW…YPAY and YVRW…ETFT. Residues 177–261 form a disordered region; that stretch reads ELHRRPIGYP…KKPAQSEPEN (85 aa). The span at 191–202 shows a compositional bias: basic and acidic residues; that stretch reads ADSDSMDERWSD.

It belongs to the DP1 family. In terms of assembly, interacts with microtubules. During gastrulation, expressed on the dorsal side of the embryo and then in the neural plate and neural tube. At tailbud stages, expressed in the somites. Expressed in the neural tube later in development.

It is found in the endoplasmic reticulum membrane. In terms of biological role, microtubule-binding protein required to ensure proper cell division and nuclear envelope reassembly by sequestering the endoplasmic reticulum away from chromosomes during mitosis. Probably acts by clearing the endoplasmic reticulum membrane from metaphase chromosomes. May play a role in the maintenance of both the nervous system and the musculature. This chain is Receptor expression-enhancing protein 4 (reep4), found in Xenopus tropicalis (Western clawed frog).